Here is a 271-residue protein sequence, read N- to C-terminus: Putative pyruvate, phosphate dikinase regulatory protein (271 aa).

153–160 (GVSRTSKT) serves as a coordination point for ADP.

Belongs to the pyruvate, phosphate/water dikinase regulatory protein family. PDRP subfamily.

The catalysed reaction is N(tele)-phospho-L-histidyl/L-threonyl-[pyruvate, phosphate dikinase] + ADP = N(tele)-phospho-L-histidyl/O-phospho-L-threonyl-[pyruvate, phosphate dikinase] + AMP + H(+). The enzyme catalyses N(tele)-phospho-L-histidyl/O-phospho-L-threonyl-[pyruvate, phosphate dikinase] + phosphate + H(+) = N(tele)-phospho-L-histidyl/L-threonyl-[pyruvate, phosphate dikinase] + diphosphate. In terms of biological role, bifunctional serine/threonine kinase and phosphorylase involved in the regulation of the pyruvate, phosphate dikinase (PPDK) by catalyzing its phosphorylation/dephosphorylation. This is Putative pyruvate, phosphate dikinase regulatory protein from Shouchella clausii (strain KSM-K16) (Alkalihalobacillus clausii).